Here is a 335-residue protein sequence, read N- to C-terminus: Tryptophan--tRNA ligase (335 aa).

ATP is bound by residues Gln13–Ser15 and Gly21–Asn22. A 'HIGH' region motif is present at residues Pro14–Asn22. Asp136 is a binding site for L-tryptophan. ATP is bound by residues Gly148–Asp150, Ile187, and Lys196–Ser200. The 'KMSKS' region signature appears at Lys196–Ser200.

Belongs to the class-I aminoacyl-tRNA synthetase family. As to quaternary structure, homodimer.

It is found in the cytoplasm. It carries out the reaction tRNA(Trp) + L-tryptophan + ATP = L-tryptophyl-tRNA(Trp) + AMP + diphosphate + H(+). Functionally, catalyzes the attachment of tryptophan to tRNA(Trp). In Buchnera aphidicola subsp. Acyrthosiphon pisum (strain APS) (Acyrthosiphon pisum symbiotic bacterium), this protein is Tryptophan--tRNA ligase.